The following is a 3258-amino-acid chain: MVVTLTKLERLQKAEKSRTFKPLIDELINCEDAVFVGKLEAIREWDRPKDDLFLWIPVLDRMDDMLGKVVAKYKYHTTDCKRHPVKLIEMAKPDEDWVATLLFFTCRLLNNTSNRSLYSSLDMMSDLLNCPNFRVKLGAMKVIATIGERHVVARHRIENSSVLASQHLKKRSLSLALALPSSTTDDNSDHFSLVDLFFDKRKYPSKWSQLQYTYYITKKQAGQQSTQKPSQVSSMKRFVLNNEELRFLSLQQIFDRAMNDLPSEFWFDFSLQASIAKAFSDDSFENIQLRSLIIQTKFAAIAFANAIYIPPQVSSKLFEMDPYAFNNLTDFISLSETKIPKDLRTDALFALECISLKHVWCSDIVRNLGGNMSHGLLFQILRYIAKVLREGDEDAVDEEYNVRFFYLISNLADVKALQESLISAGLISSLLEIVSTQNSKYKRTLASAAHLLEDVISDADATAEFINNNGFNILIQTVTYEVNFAVQNPSSAEPPKYSVVYYSISFRQLGFIRSLLKLVLKLLKTDSGDRIRNLIDSPILLAFNKILENRPVFGYTLVSHALDVVQTIINTEPTIYQVLVESGTIPYILQNFDQFLGPTSDLLCMLPEVISAICLNTDGLKQVKEKNLLKYLFQVIKTPEFAKILSWEDQAVNYGVALDELARHYPELKPLIEDYFAATVKELPSLTSYTHSYLYESTAGNGEFYLSENETIIDNEDGADELAFWEVQESSPIIDCFSGVFYSMASENISWANLTEKIAFQDFLSVAIPEKPTFDYINSQTLLNFTDVLKMFDDERRSYALPELLTILDSKFADLEDFLSYDFTKSYVLNEPKDRVVATLNKLNVLNVILYIMTDIYINITTLFPVRVIQMMEFFEKNGFNLITNLRKMFQRCVLEEMYIRSRLPPAVAEETISPGISFVPPILIHKDVPLKTEAKQEKTSAKFKNTLETRHLFQKVQSWTSMLFRCFLRLTHARKMNVERYDRALEIRIFDKVVNEIVEMLNLDYLDSHLSYFLVVLDFNTHIFTCPKASLTISDGIVQTVPTFLFYQAGGFAIYHELIKKLSTRLLGFDGIEAIEKVEYVKDQDDILTVGVLMNSIAFMNRCIQLETMENIRSIAEYYPYDDIYYNLTRALIVPVKILSLGAISEIFSQGEVFDTDRRRIPYSVFKQILSLLKNIYNSTFELEEGTDVYELRWDLMPISHRKVEMLKSCGISHDVAVGYLEEEKDELPIHVKPDVFSDSEWQRYQEERSSGSWRTNIELLPPQYNGSSTRETLSKMRTEFYQNGFESGILKILQHYPKLINAISHMFFEMYGELGFSHTTMLEDLQDMMNTIPIENTNKLAPVIHLFGIFLNDKNIYDQAKKEIFKFVSYLSMNLHPENVNYSWFSKALYVYEIIFAKSETPEASPLPENVTVSFSSIPIIYRISQKDKDIIFNLLIRANEVTDFYSALAISRILILYTREERYAQEVTQSGILSKLLKVIGANQKFDKINYLESSYLLLVRRCFETKEIVTSLIDYELTRAFTTRAIGDHKEKPRDLPALVNEKASIVMRDPEVFVNRISETARFEDFNSSKELASLSVRRHMDEKDEEMTSKPLSSEGSNSPITGIVHLLLSQLMAAHKRDWVSETPLTPEEENQKNKKKKDEVKVSKNPVCAYMIFLLKVLTELVSSYKQSKFEFLTYNKKNVYNETPKPRATALNFFLYQLLDTNFQDMDKHEGKRRAMISGLARDTIIGFVSSVQDSETKKVDPKIVDSDMTYIRKFTIEAISKAIKEAGVSAKTIDANAGKLFGWFHLISSLLVVDKGYIFSVLDSNKSSNDKYQLCKLLIEMNTPGTITDCMASLDLNYPLTKKLFNSAVEPLNALNEVRNNFADLFKLENNEDEDVEDVESDKDDVPDMFKNSALGMYDIEDVEDDHDDDENESLIGDDEDIAFVHDEDGLEVVFSEDEDANEDTTDASNSIGSDSEGNSDFGGSGPNVTLEVYTDSEDAIEDVNTAAIRITSGNSAEHSYYSEGEDSAEIEIYEEEYDSEIDIDMDDDSELGSSNWESGLSDLSDSEAYSDEERTNNTGDGFVRWYSDDGVEFEDDTDEEGRGLFTGIQHVFPTEEQLFRVHASGAARSTGRHHHRHGAAPFTTSTITLGASQRRPHSILSNPLGPSGLEEVENDIVSHYLGNVETSDRIGLSSIPRLPRVLLFDGELFDDKSSSGILLKSTTARWNDIYEMFYDSKVYSNNVVTTIISRIFEPSAELYLKEQEENAVKESSRINEPTRRQDERKRKLHEIDSDEEHIEEEEEHDEVVEPIEAPGINSPQARAPQEPVYVTIDGEAVNIAGTDMDAEFLNALPDDIRAEVFAQHIREYRTQFQGSEGSSRELDAGFLNTIPETLRQEILAQEVPLERNARPSILGLRNREGEEFSEVEDESPRFNEQRTESSKTKTDRVHFAPLLDRSGIAAIMKAVFIPQPYLSREIYHELFYRLCSSKQNRSDIMNMLLLILMDGINDQHSLERVYNLLSNRAASSNSGTSKTPQRQLPPDCTPLIVTNQCIEILQSMVDADSKLKYFFITEHENLLINKSPLKNKKDIFSKNMKWPINCILALLEKKVITDEAVLMDLLTRILQVCSKPISSIVKSSKDGKKKKFEVPDIEKKYLASIVSIIKLDSCNTKVFQQTLNLMTNLFAIKDAHETFTTELCNLAKETIEVLVTDLDALAKEVPAVDSGTEVSSEIIQKFTVPSSDQSKLLKVLTAIDYIYVNRKKEEEQVVDQLLPLYNKMELGHIWVSLSNCLTRFEEKPRMSTSATILLPLIESLMVVCKHSKVRETKDALLKYEAKKCDFARTPVENLFFAFTDLHKKLLNEMIRSNPKLMSGPFSLLVKNPKILDFDNKRYYFTAQLRAITHDRPKLSISVRREHVFLDSYRSLFFKSNEDIKISKLEISFKGEAGVDAGGITREWYQVLSRQMFNPDYALFIPVASDKTTFRPNRTSGINPEHLSFFKFIGMIIGKAISDQCFLDCHFSREVYKNILGKPVALKDMESLDLDYYKSLIWILENDITDIIEETFSVETDDYGEHKVIELIENGAHVAVTEQNKHDYVKKIVEYKLQTSVKDQMENFLQGFYAIIPKDLISIFDEQELELLVSGLPDIDVDDWKNNTIYVNYTPTCKQINYFWRAVRSFDKEERAKLLQFVTGTSKVPLNGFKELSGVNGISKFSIHRDYGSIDRLPSSHTCFNQLDLPAYDSYETLRGSLLLAINEGHEGFGIA.

Disordered stretches follow at residues 1582 to 1603 (VRRHMDEKDEEMTSKPLSSEGS), 1945 to 1981 (FSEDEDANEDTTDASNSIGSDSEGNSDFGGSGPNVTL), 2036 to 2074 (MDDDSELGSSNWESGLSDLSDSEAYSDEERTNNTGDGFV), 2254 to 2298 (QEEN…HDEV), and 2411 to 2436 (EGEEFSEVEDESPRFNEQRTESSKTK). Positions 1584–1594 (RHMDEKDEEMT) are enriched in basic and acidic residues. A compositionally biased stretch (acidic residues) spans 1945–1956 (FSEDEDANEDTT). Composition is skewed to polar residues over residues 1959 to 1969 (SNSIGSDSEGN) and 2042 to 2054 (LGSSNWESGLSDL). The span at 2254-2282 (QEENAVKESSRINEPTRRQDERKRKLHEI) shows a compositional bias: basic and acidic residues. Positions 2283-2298 (DSDEEHIEEEEEHDEV) are enriched in acidic residues. Positions 2421 to 2436 (ESPRFNEQRTESSKTK) are enriched in basic and acidic residues. An HECT domain is found at 2922–3258 (SNEDIKISKL…NEGHEGFGIA (337 aa)). C3225 acts as the Glycyl thioester intermediate in catalysis.

It belongs to the UPL family. TOM1/PTR1 subfamily.

The protein localises to the nucleus. It is found in the nucleolus. The catalysed reaction is S-ubiquitinyl-[E2 ubiquitin-conjugating enzyme]-L-cysteine + [acceptor protein]-L-lysine = [E2 ubiquitin-conjugating enzyme]-L-cysteine + N(6)-ubiquitinyl-[acceptor protein]-L-lysine.. Its pathway is protein modification; protein ubiquitination. In terms of biological role, probable ubiquitin ligase protein, which may be involved in mRNA export. E3 ubiquitin ligase proteins mediate ubiquitination and subsequent proteasomal degradation of target proteins. Participates in mRNA export from the nucleus by regulating the transport of hnRNP proteins. The sequence is that of Probable E3 ubiquitin-protein ligase TOM1 (TOM1) from Eremothecium gossypii (strain ATCC 10895 / CBS 109.51 / FGSC 9923 / NRRL Y-1056) (Yeast).